We begin with the raw amino-acid sequence, 111 residues long: MTSTRKLSVSCLIVFMVSSLIAVSSGWLSSTGKSPLKIGKCDPKNGNLYAIGRKWYNDEDCFEITCIQGDKGSVAQQVASCPVHAVKPGCELVFPGGTYPKCCPYYECPNS.

Residues 1-26 (MTSTRKLSVSCLIVFMVSSLIAVSSG) form the signal peptide.

The protein belongs to the scoloptoxin-16 family. Contains 4 disulfide bonds. Expressed by the venom gland.

It localises to the secreted. This chain is U-scoloptoxin(16)-Er8a, found in Ethmostigmus rubripes (Giant centipede).